The primary structure comprises 241 residues: Uridylate kinase (241 aa).

15–18 (KLSG) is a binding site for ATP. Residues 23–28 (GTEGFG) form an involved in allosteric activation by GTP region. Residue glycine 57 participates in UMP binding. Glycine 58 and arginine 62 together coordinate ATP. Residues aspartate 77 and 138–145 (TGNPFFTT) contribute to the UMP site. Residues threonine 165, tyrosine 171, and aspartate 174 each coordinate ATP.

This sequence belongs to the UMP kinase family. As to quaternary structure, homohexamer.

The protein localises to the cytoplasm. It catalyses the reaction UMP + ATP = UDP + ADP. The protein operates within pyrimidine metabolism; CTP biosynthesis via de novo pathway; UDP from UMP (UMPK route): step 1/1. Its activity is regulated as follows. Allosterically activated by GTP. Inhibited by UTP. In terms of biological role, catalyzes the reversible phosphorylation of UMP to UDP. In Pectobacterium atrosepticum (strain SCRI 1043 / ATCC BAA-672) (Erwinia carotovora subsp. atroseptica), this protein is Uridylate kinase.